Here is a 416-residue protein sequence, read N- to C-terminus: Serine hydroxymethyltransferase 1 (416 aa).

(6S)-5,6,7,8-tetrahydrofolate-binding positions include Leu121 and 125–127 (GHL). Lys229 carries the post-translational modification N6-(pyridoxal phosphate)lysine. (6S)-5,6,7,8-tetrahydrofolate is bound by residues Glu245 and 354-356 (SPF).

It belongs to the SHMT family. As to quaternary structure, homodimer. Pyridoxal 5'-phosphate is required as a cofactor.

The protein resides in the cytoplasm. The catalysed reaction is (6R)-5,10-methylene-5,6,7,8-tetrahydrofolate + glycine + H2O = (6S)-5,6,7,8-tetrahydrofolate + L-serine. It participates in one-carbon metabolism; tetrahydrofolate interconversion. The protein operates within amino-acid biosynthesis; glycine biosynthesis; glycine from L-serine: step 1/1. Catalyzes the reversible interconversion of serine and glycine with tetrahydrofolate (THF) serving as the one-carbon carrier. This reaction serves as the major source of one-carbon groups required for the biosynthesis of purines, thymidylate, methionine, and other important biomolecules. Also exhibits THF-independent aldolase activity toward beta-hydroxyamino acids, producing glycine and aldehydes, via a retro-aldol mechanism. This chain is Serine hydroxymethyltransferase 1, found in Photobacterium profundum (strain SS9).